The chain runs to 283 residues: Elongation factor Ts (283 aa).

The segment at 80–83 (TDFV) is involved in Mg(2+) ion dislocation from EF-Tu.

This sequence belongs to the EF-Ts family.

Its subcellular location is the cytoplasm. Associates with the EF-Tu.GDP complex and induces the exchange of GDP to GTP. It remains bound to the aminoacyl-tRNA.EF-Tu.GTP complex up to the GTP hydrolysis stage on the ribosome. The protein is Elongation factor Ts of Serratia proteamaculans (strain 568).